Here is a 153-residue protein sequence, read N- to C-terminus: Insulin-like growth factor 1 (153 aa).

Residues glycine 49–threonine 77 form a b region. 3 disulfides stabilise this stretch: cysteine 54/cysteine 96, cysteine 66/cysteine 109, and cysteine 95/cysteine 100. Residues glycine 78 to threonine 89 form a c region. The segment at glycine 90–alanine 110 is a. Residues proline 111 to alanine 118 form a d region. Positions arginine 119 to methionine 153 are cleaved as a propeptide — e peptide. The disordered stretch occupies residues serine 120–methionine 153. Over residues arginine 125–leucine 138 the composition is skewed to basic and acidic residues. Residues serine 142–methionine 153 are compositionally biased toward polar residues.

The protein belongs to the insulin family. Forms a ternary complex with IGFR1 and ITGAV:ITGB3. Forms a ternary complex with IGFR1 and ITGA6:ITGB4. Forms a ternary complex with IGFBP3 and ALS.

The protein localises to the secreted. In terms of biological role, the insulin-like growth factors, isolated from plasma, are structurally and functionally related to insulin but have a much higher growth-promoting activity. May be a physiological regulator of [1-14C]-2-deoxy-D-glucose (2DG) transport and glycogen synthesis in osteoblasts. Stimulates glucose transport in bone-derived osteoblastic (PyMS) cells and is effective at much lower concentrations than insulin, not only regarding glycogen and DNA synthesis but also with regard to enhancing glucose uptake. May play a role in synapse maturation. Ca(2+)-dependent exocytosis of IGF1 is required for sensory perception of smell in the olfactory bulb. Acts as a ligand for IGF1R. Binds to the alpha subunit of IGF1R, leading to the activation of the intrinsic tyrosine kinase activity which autophosphorylates tyrosine residues in the beta subunit thus initiating a cascade of down-stream signaling events leading to activation of the PI3K-AKT/PKB and the Ras-MAPK pathways. Binds to integrins ITGAV:ITGB3 and ITGA6:ITGB4. Its binding to integrins and subsequent ternary complex formation with integrins and IGFR1 are essential for IGF1 signaling. Induces the phosphorylation and activation of IGFR1, MAPK3/ERK1, MAPK1/ERK2 and AKT1. As part of the MAPK/ERK signaling pathway, acts as a negative regulator of apoptosis in cardiomyocytes via promotion of STUB1/CHIP-mediated ubiquitination and degradation of ICER-type isoforms of CREM. This chain is Insulin-like growth factor 1, found in Panthera tigris altaica (Siberian tiger).